A 317-amino-acid chain; its full sequence is L-lactate dehydrogenase 1 (317 aa).

NAD(+) contacts are provided by residues Val-17, Asp-38, Lys-43, Tyr-69, and 83-84 (GA). Positions 86 and 92 each coordinate substrate. NAD(+) contacts are provided by residues Ser-105, 122–124 (ATN), and Ser-147. Residue 124 to 127 (NPVD) coordinates substrate. 152–155 (DSAR) is a substrate binding site. The active-site Proton acceptor is His-179. At Tyr-223 the chain carries Phosphotyrosine. Thr-232 lines the substrate pocket.

This sequence belongs to the LDH/MDH superfamily. LDH family. In terms of assembly, homotetramer.

Its subcellular location is the cytoplasm. The catalysed reaction is (S)-lactate + NAD(+) = pyruvate + NADH + H(+). Its pathway is fermentation; pyruvate fermentation to lactate; (S)-lactate from pyruvate: step 1/1. Its function is as follows. Catalyzes the conversion of lactate to pyruvate (Potential). Appears to be the primary factor that allows S.aureus growth during nitrosative stress in both aerobically and anaerobically cultured cells. The protein is L-lactate dehydrogenase 1 of Staphylococcus aureus (strain MRSA252).